Reading from the N-terminus, the 252-residue chain is PHD finger protein ALFIN-LIKE 7 (252 aa).

A disordered region spans residues 141 to 193 (AKQSKDQSANHNSSRSKSSGGKPRHSESHTKASKMSPPPRKEDESGDEDEDDE). The segment covering 149 to 161 (ANHNSSRSKSSGG) has biased composition (low complexity). Phosphoserine is present on Ser176. A compositionally biased stretch (acidic residues) spans 184–193 (ESGDEDEDDE). The segment at 195 to 247 (GAVCGACGDNYGGDEFWICCDACEKWFHGKCVKITPAKAEHIKHYKCPSCTTS) adopts a PHD-type zinc-finger fold.

It belongs to the Alfin family. Interacts with H3K4me3 and to a lesser extent with H3K4me2. Ubiquitously expressed.

The protein localises to the nucleus. In terms of biological role, histone-binding component that specifically recognizes H3 tails trimethylated on 'Lys-4' (H3K4me3), which mark transcription start sites of virtually all active genes. The chain is PHD finger protein ALFIN-LIKE 7 (AL7) from Arabidopsis thaliana (Mouse-ear cress).